The sequence spans 506 residues: Maturase K (506 aa).

This sequence belongs to the intron maturase 2 family. MatK subfamily.

It localises to the plastid. The protein resides in the chloroplast. In terms of biological role, usually encoded in the trnK tRNA gene intron. Probably assists in splicing its own and other chloroplast group II introns. This chain is Maturase K, found in Jurinea cyanoides.